Reading from the N-terminus, the 662-residue chain is Glycogen debranching enzyme (662 aa).

Aspartate 338 functions as the Nucleophile in the catalytic mechanism. Residue glutamate 373 is the Proton donor of the active site.

This sequence belongs to the glycosyl hydrolase 13 family.

It carries out the reaction Hydrolysis of (1-&gt;6)-alpha-D-glucosidic linkages to branches with degrees of polymerization of three or four glucose residues in limit dextrin.. It participates in glycan degradation; glycogen degradation. Functionally, removes maltotriose and maltotetraose chains that are attached by 1,6-alpha-linkage to the limit dextrin main chain, generating a debranched limit dextrin. The polypeptide is Glycogen debranching enzyme (Yersinia pestis).